The sequence spans 48 residues: Light-harvesting protein B-870 beta chain (48 aa).

The Cytoplasmic portion of the chain corresponds to 2–21; it reads AERKGSISGLTDDEAQEFHK. A bacteriochlorophyll-binding residues include His-20 and His-38. The chain crosses the membrane as a helical span at residues 22-44; the sequence is FWVQGFVGFTAVAVVAHFLVWVW. Topologically, residues 45-48 are periplasmic; the sequence is RPWL.

An alpha/beta heterodimer. The core complex is formed by different alpha and beta chains, binding bacteriochlorophyll molecules, and arranged most probably in tetrameric structures disposed around the reaction center. The non-pigmented gamma chains may constitute additional components.

It is found in the cell inner membrane. Functionally, antenna complexes are light-harvesting systems, which transfer the excitation energy to the reaction centers. This Rubrivivax gelatinosus (Rhodocyclus gelatinosus) protein is Light-harvesting protein B-870 beta chain (pufB).